The chain runs to 214 residues: Large ribosomal subunit protein uL3 (214 aa).

Positions 133 to 155 are disordered; it reads ATHGNSRSHRVPGSTGQCQSPGR. Q151 is subject to N5-methylglutamine.

It belongs to the universal ribosomal protein uL3 family. Part of the 50S ribosomal subunit. Forms a cluster with proteins L14 and L19. Methylated by PrmB.

In terms of biological role, one of the primary rRNA binding proteins, it binds directly near the 3'-end of the 23S rRNA, where it nucleates assembly of the 50S subunit. The polypeptide is Large ribosomal subunit protein uL3 (Cellvibrio japonicus (strain Ueda107) (Pseudomonas fluorescens subsp. cellulosa)).